The following is a 301-amino-acid chain: MSATVEFARMNGLGNKILVVDMRGRSDKVTPAAAVALNADPQTEFDQIMAIHDPKADGTDAFIDILNSDGSKAQACGNGTRCVVQALAAETGRKAFTFQTVAGILNAIEHEDGTISVDMGKPVFDWDRIPLAEEFHDTSRIELQIGPIDNPLLHSPSAMSMGNPHAIFWVDKDVMSYDLARFGPLLENHPMFPERANITLAQVTSPTTMTTRTWERGAGLTLACGSAACSAAVSAARTGRTGRKVKINVASAKPPAMLSIEWRERDDHVIMTGPAEWEWSGRLDPATGCWSRDDAREVEAQ.

Asn15, Gln47, and Asn67 together coordinate substrate. Cys76 (proton donor) is an active-site residue. Substrate-binding positions include 77–78 (GN), Asn163, Asn197, and 215–216 (ER). Cys224 functions as the Proton acceptor in the catalytic mechanism. 225–226 (GS) is a substrate binding site.

The protein belongs to the diaminopimelate epimerase family. Homodimer.

The protein localises to the cytoplasm. The catalysed reaction is (2S,6S)-2,6-diaminopimelate = meso-2,6-diaminopimelate. It functions in the pathway amino-acid biosynthesis; L-lysine biosynthesis via DAP pathway; DL-2,6-diaminopimelate from LL-2,6-diaminopimelate: step 1/1. In terms of biological role, catalyzes the stereoinversion of LL-2,6-diaminopimelate (L,L-DAP) to meso-diaminopimelate (meso-DAP), a precursor of L-lysine and an essential component of the bacterial peptidoglycan. The polypeptide is Diaminopimelate epimerase (Rhizobium etli (strain ATCC 51251 / DSM 11541 / JCM 21823 / NBRC 15573 / CFN 42)).